Here is a 60-residue protein sequence, read N- to C-terminus: Conotoxin VnMRCL-012 (60 aa).

An N-terminal signal peptide occupies residues 1 to 22; it reads MRCLPVFVILLLLIASAPGVDA. Residues 23–50 constitute a propeptide that is removed on maturation; the sequence is QPKTKYDVPLASRHDFAKKTPKRLSKPR.

It belongs to the conotoxin T superfamily. Post-translationally, contains 2 disulfide bonds that can be either 'C1-C3, C2-C4' or 'C1-C4, C2-C3', since these disulfide connectivities have been observed for conotoxins with cysteine framework V (for examples, see AC P0DQQ7 and AC P81755). In terms of tissue distribution, expressed by the venom duct.

It localises to the secreted. This chain is Conotoxin VnMRCL-012, found in Conus ventricosus (Mediterranean cone).